We begin with the raw amino-acid sequence, 979 residues long: MAGRARSRLLLLLGLLALQSSCLAFRSPLSVFKRFKETTRSFSNECLGTTRPITPIDSSDFTLDIRMPGVTPKESDTYFCMSMRLPVDEEAFVIDFKPRASMDTVHHMLLFGCNMPSSTGSYWFCDEGTCTDKANILYAWARNAPPTRLPKGVGFRVGGETGSKYFVLQVHYGDISAFRDNHKDCSGVSLHLTRVPQPLIAGMYLMMSVNTVIPPGEKVVNSDISCHYKMYPMHVFAYRVHTHHLGKVVSGYRVRNGQWTLIGRQSPQLPQAFYPVEHPVDVAFGDILAARCVFTGEGRTEATHIGGTSSDEMCNLYIMYYMEAKHAVSFMTCTQNVAPDMFRTIPEEANIPIPVKSDMVMIHGHHKETENKEKSALIQQPKQGEEEAFEQGDFYSLLSKLLGEREDVVHVHKYNPTEKTESGSDLVAEIANVVQKKDLGRSDAREGAEHEEGGNAILVRDRIHKFHRLESTLRPAESRALSFQQPGEGPWEPELAGDFHVEEALEWPGVYLLPGQVSGVALDSKNNLVIFHRGDHVWDGNSFDSKFVYQQRGLGPIEEDTILVIDPNKAEILQSSGKNLFYLPHGLSIDTDGNYWVTDVALHQVFKLEPRSKEGPLLVLGRSMQPGSDQNHFCQPTDVAVEPSTGAVFVSDGYCNSRIVQFSPSGKFITQWGEESSGSSPKPGQFSVPHSLALVPHLNQLCVADRENGRIQCFKTDTKEFVREIKHASFGRNVFAISYIPGFLFAVNGKPYFGDQEPVQGFVMNFSSGEIIDVFKPVRKHFDMPHDIVASEDGTVYIGDAHTNTVWKFTLTESRLEVEHRSVKKAGIEVPEIKEAEAVVEPKVKNKPTSSELQKMQEKKKLIKDPGSGVPVVLITTLLVIPVVVLLAIAMFIRWKKSRAFGDHDRKLESSSGRVLGRLRGKGSSGLNLGNFFASRKGYSRKGFDRVSTEGSDQEKDEDDGSESEEEYSAPLPTPAPSS.

The first 24 residues, Met1–Ala24, serve as a signal peptide directing secretion. Residues Met1 to Gly497 are peptidylglycine alpha-hydroxylating monooxygenase. The propeptide occupies Phe25–Arg34. Residues Phe35–Gly869 are Intragranular-facing. 5 disulfide bridges follow: Cys46–Cys185, Cys80–Cys125, Cys113–Cys130, Cys226–Cys333, and Cys292–Cys314. Cu(2+) contacts are provided by His106 and His107. Residues His171, His241, His243, and Met313 each contribute to the Cu(2+) site. The tract at residues Asp498–Val823 is peptidyl-alpha-hydroxyglycine alpha-amidating lyase. NHL repeat units follow at residues Val501–Asp544, Ala570–Arg611, Leu620–Ser665, and Gly673–Asp717. Residue Val520 coordinates Ca(2+). Arg533 contributes to the a protein binding site. Residue His585 participates in Zn(2+) binding. A Ca(2+)-binding site is contributed by Leu587. Cysteines 634 and 655 form a disulfide. An a protein-binding site is contributed by Tyr654. Residue His690 participates in Zn(2+) binding. Residues Cys702 and Cys713 are joined by a disulfide bond. Arg706 serves as a coordination point for a protein. A glycan (N-linked (GlcNAc...) asparagine) is linked at Asn765. The NHL 5 repeat unit spans residues Gly769–Thr812. His786 lines the Zn(2+) pocket. Asp787 is a Ca(2+) binding site. A helical membrane pass occupies residues Val870–Ile893. Residues Arg894–Ser979 are Cytoplasmic-facing. 4 positions are modified to phosphoserine: Ser924, Ser925, Ser935, and Ser948. Positions Asn931 to Ser948 are interaction with RASSF9. Residues Gly943 to Ser979 are disordered. Thr949 is modified (phosphothreonine). Phosphoserine; by UHMK1 is present on Ser952. Positions Glu955–Tyr968 are enriched in acidic residues. Ser964 carries the phosphoserine modification.

It in the C-terminal section; belongs to the peptidyl-alpha-hydroxyglycine alpha-amidating lyase family. In the N-terminal section; belongs to the copper type II ascorbate-dependent monooxygenase family. As to quaternary structure, monomer. Interacts with RASSF9. Requires Zn(2+) as cofactor. It depends on Cu(2+) as a cofactor.

Its subcellular location is the cytoplasmic vesicle. The protein resides in the secretory vesicle membrane. The enzyme catalyses a [peptide]-C-terminal glycine + 2 L-ascorbate + O2 = a [peptide]-C-terminal (2S)-2-hydroxyglycine + 2 monodehydro-L-ascorbate radical + H2O. It catalyses the reaction a [peptide]-C-terminal (2S)-2-hydroxyglycine = a [peptide]-C-terminal amide + glyoxylate. It carries out the reaction N-dodecanoylglycine + 2 L-ascorbate + O2 = N-dodecanoyl-(2S)-hydroxyglycine + 2 monodehydro-L-ascorbate radical + H2O. The catalysed reaction is N-dodecanoyl-(2S)-hydroxyglycine = dodecanamide + glyoxylate. The enzyme catalyses N-(9Z,12Z,15Z)-octadecatrienoylglycine + 2 L-ascorbate + O2 = N-(9Z,12Z,15Z)-octadecatrienoyl-(2S)-hydroxyglycine + 2 monodehydro-L-ascorbate radical + H2O. It catalyses the reaction N-(9Z,12Z,15Z)-octadecatrienoyl-(2S)-hydroxyglycine = (9Z,12Z,15Z)-octadecatrienamide + glyoxylate. It carries out the reaction N-(9Z-octadecenoyl)glycine + 2 L-ascorbate + O2 = N-(9Z-octadecenoyl)-(2S)-hydroxyglycine + 2 monodehydro-L-ascorbate radical + H2O. The catalysed reaction is N-(9Z-octadecenoyl)-(2S)-hydroxyglycine = (9Z)-octadecenamide + glyoxylate. The enzyme catalyses N-tetradecanoylglycine + 2 L-ascorbate + O2 = N-tetradecanoyl-(2S)-hydroxyglycine + 2 monodehydro-L-ascorbate radical + H2O. It catalyses the reaction N-tetradecanoyl-(2S)-hydroxyglycine = tetradecamide + glyoxylate. It carries out the reaction N-decanoylglycine + 2 L-ascorbate + O2 = N-decanoyl-(2S)-hydroxyglycine + 2 monodehydro-L-ascorbate radical + H2O. The catalysed reaction is N-decanoyl-(2S)-hydroxyglycine = decanamide + glyoxylate. The enzyme catalyses N-octanoylglycine + 2 L-ascorbate + O2 = N-octanoyl-(2S)-hydroxyglycine + 2 monodehydro-L-ascorbate radical + H2O. It catalyses the reaction N-octanoyl-(2S)-hydroxyglycine = octanamide + glyoxylate. Its activity is regulated as follows. PAM activity is inhibited by EDTA, phenylglyoxal and diethyl pyrocarbonate. PAL activity is stimulated by cadmium and inhibited by mercury. Functionally, bifunctional enzyme that catalyzes amidation of the C-terminus of proteins. Alpha-amidation is present at the C-terminus of many endocrine hormones and neuropeptides and is required for their activity. C-terminal amidation also takes place in response to protein fragmentation triggered by oxidative stress, promoting degradation of amidated protein fragments by the proteasome. Alpha-amidation involves two sequential reactions, both of which are catalyzed by separate catalytic domains of the enzyme. The first step, catalyzed by peptidyl alpha-hydroxylating monooxygenase (PHM) domain, is the copper-, ascorbate-, and O2- dependent stereospecific hydroxylation (with S stereochemistry) at the alpha-carbon (C-alpha) of the C-terminal glycine of the peptidylglycine substrate. The second step, catalyzed by the peptidylglycine amidoglycolate lyase (PAL) domain, is the zinc-dependent cleavage of the N-C-alpha bond, producing the alpha-amidated peptide and glyoxylate. Similarly, catalyzes the two-step conversion of an N-fatty acylglycine to a primary fatty acid amide and glyoxylate. The protein is Peptidyl-glycine alpha-amidating monooxygenase of Mus musculus (Mouse).